Here is a 268-residue protein sequence, read N- to C-terminus: Mesoderm posterior protein 1 (268 aa).

A disordered region spans residues 17 to 93 (AAWGPTRRPP…RQSASEREKL (77 aa)). Positions 36-48 (LVSSPDSWGSTPA) are enriched in polar residues. The segment covering 66–86 (APSVGRRGARSSRLGSGQRQS) has biased composition (low complexity). A bHLH domain is found at 82–136 (GQRQSASEREKLRMRTLARALHELRRFLPPSVAPAGQSLTKIETLRLAIRYIGHL). A CPLCP motif is present at residues 163-167 (CPLCP). Tandem repeats lie at residues 182-183 (GQ) and 184-185 (GQ). A 2 X 2 AA tandem repeats of G-Q region spans residues 182–185 (GQGQ).

The protein resides in the nucleus. In terms of biological role, transcription factor. Plays a role in the epithelialization of somitic mesoderm and in the development of cardiac mesoderm. Defines the rostrocaudal patterning of the somites by participating in distinct Notch pathways. This Homo sapiens (Human) protein is Mesoderm posterior protein 1 (MESP1).